The following is a 330-amino-acid chain: 1-aminocyclopropane-1-carboxylate oxidase 2 (330 aa).

Positions 153 to 253 (PNFGTKVSNY…RMSIASFYNP (101 aa)) constitute a Fe2OG dioxygenase domain. Residues His177, Asp179, and His234 each contribute to the Fe cation site.

Belongs to the iron/ascorbate-dependent oxidoreductase family. As to quaternary structure, monomer. The cofactor is Fe cation.

The enzyme catalyses 1-aminocyclopropane-1-carboxylate + L-ascorbate + O2 = ethene + L-dehydroascorbate + hydrogen cyanide + CO2 + 2 H2O. It participates in alkene biosynthesis; ethylene biosynthesis via S-adenosyl-L-methionine; ethylene from S-adenosyl-L-methionine: step 2/2. The protein is 1-aminocyclopropane-1-carboxylate oxidase 2 (ACO2) of Malus domestica (Apple).